The chain runs to 117 residues: Aspartate 1-decarboxylase (117 aa).

Residue serine 25 is the Schiff-base intermediate with substrate; via pyruvic acid of the active site. Serine 25 is modified (pyruvic acid (Ser)). Threonine 57 is a substrate binding site. The active-site Proton donor is the tyrosine 58. 73–75 (GAA) serves as a coordination point for substrate.

The protein belongs to the PanD family. As to quaternary structure, heterooctamer of four alpha and four beta subunits. Pyruvate serves as cofactor. Post-translationally, is synthesized initially as an inactive proenzyme, which is activated by self-cleavage at a specific serine bond to produce a beta-subunit with a hydroxyl group at its C-terminus and an alpha-subunit with a pyruvoyl group at its N-terminus.

It localises to the cytoplasm. The catalysed reaction is L-aspartate + H(+) = beta-alanine + CO2. It participates in cofactor biosynthesis; (R)-pantothenate biosynthesis; beta-alanine from L-aspartate: step 1/1. In terms of biological role, catalyzes the pyruvoyl-dependent decarboxylation of aspartate to produce beta-alanine. This Bacteroides fragilis (strain ATCC 25285 / DSM 2151 / CCUG 4856 / JCM 11019 / LMG 10263 / NCTC 9343 / Onslow / VPI 2553 / EN-2) protein is Aspartate 1-decarboxylase.